The primary structure comprises 233 residues: Lipoprotein-releasing system ATP-binding protein LolD (233 aa).

The ABC transporter domain maps to 9–233; it reads LAINAVSKVF…GILSQSETHR (225 aa). ATP is bound at residue 45–52; it reads GSSGSGKS.

The protein belongs to the ABC transporter superfamily. Lipoprotein translocase (TC 3.A.1.125) family. In terms of assembly, the complex is composed of two ATP-binding proteins (LolD) and two transmembrane proteins (LolC and LolE).

Its subcellular location is the cell inner membrane. Its function is as follows. Part of the ABC transporter complex LolCDE involved in the translocation of mature outer membrane-directed lipoproteins, from the inner membrane to the periplasmic chaperone, LolA. Responsible for the formation of the LolA-lipoprotein complex in an ATP-dependent manner. The protein is Lipoprotein-releasing system ATP-binding protein LolD of Shewanella denitrificans (strain OS217 / ATCC BAA-1090 / DSM 15013).